The following is a 388-amino-acid chain: P2X purinoceptor 4 (388 aa).

At 1 to 33 the chain is on the cytoplasmic side; that stretch reads MAGCCSVLGSFLFEYDTPRIVLIRSRKVGLMNR. A helical transmembrane segment spans residues 34–54; sequence VVQLLILAYVIGWVFVWEKGY. Residues 55–338 lie on the Extracellular side of the membrane; that stretch reads QETDSVVSSV…KFDIIPTMIN (284 aa). ATP is bound by residues K67 and K69. Residues K67 and K69 each contribute to the CTP site. N75, N110, N131, N153, and N184 each carry an N-linked (GlcNAc...) asparagine glycan. Intrachain disulfides connect C116/C165, C126/C149, and C132/C159. Residues T186 and L188 each coordinate ATP. Residue T186 participates in CTP binding. Residues N199 and N208 are each glycosylated (N-linked (GlcNAc...) asparagine). 2 cysteine pairs are disulfide-bonded: C217/C227 and C261/C270. Positions 293, 295, and 313 each coordinate ATP. Positions 293, 295, and 313 each coordinate CTP. The chain crosses the membrane as a helical span at residues 339-359; sequence VGSGLALLGVATVLCDVIVLY. The Cytoplasmic portion of the chain corresponds to 360 to 388; sequence CMKKRYYYRDKKYKYVEDYEQGLSGEMNQ.

Belongs to the P2X receptor family. As to quaternary structure, functional P2RXs are organized as homomeric and heteromeric trimers. Functional P2XRs are organized as homomeric and heteromeric trimers. Forms heterotrimer with P2RX1. Interacts with P2RX7 (via C-terminus); this interaction is functional only in the presence of ATP. Forms heterotrimer with P2RX4; functional differences between homomeric P2RX4 and P2RX4/6 heterotrimer are minor. Interacts with AP1M2.

It localises to the cell membrane. Its subcellular location is the lysosome membrane. It carries out the reaction K(+)(in) = K(+)(out). The enzyme catalyses Na(+)(in) = Na(+)(out). The catalysed reaction is Ca(2+)(in) = Ca(2+)(out). With respect to regulation, activated by ATP. pH-dependent and inhibited by acidic pH. In terms of biological role, ATP-gated nonselective transmembrane cation channel permeable to potassium, sodium and calcium. CTP, but not GTP or UTP, functions as a weak affinity agonist for P2RX4. Activated by extracellularly released ATP, it plays multiple role in immunity and central nervous system physiology. Plays a key role in initial steps of T-cell activation and Ca(2+) microdomain formation. Also participates in basal T-cell activity without TCR/CD3 stimulation. Promotes the differentiation and activation of Th17 cells via expression of retinoic acid-related orphan receptor C/RORC. Upon activation, drives microglia motility via the PI3K/Akt pathway. Could also function as an ATP-gated cation channel of lysosomal membranes. This chain is P2X purinoceptor 4 (P2rx4), found in Mus musculus (Mouse).